A 347-amino-acid polypeptide reads, in one-letter code: Nicotinate-nucleotide--dimethylbenzimidazole phosphoribosyltransferase (347 aa).

Glutamate 316 serves as the catalytic Proton acceptor.

The protein belongs to the CobT family.

It catalyses the reaction 5,6-dimethylbenzimidazole + nicotinate beta-D-ribonucleotide = alpha-ribazole 5'-phosphate + nicotinate + H(+). Its pathway is nucleoside biosynthesis; alpha-ribazole biosynthesis; alpha-ribazole from 5,6-dimethylbenzimidazole: step 1/2. Functionally, catalyzes the synthesis of alpha-ribazole-5'-phosphate from nicotinate mononucleotide (NAMN) and 5,6-dimethylbenzimidazole (DMB). The chain is Nicotinate-nucleotide--dimethylbenzimidazole phosphoribosyltransferase from Vibrio campbellii (strain ATCC BAA-1116).